The sequence spans 154 residues: ORF3b protein (154 aa).

The segment at 80–138 (LQTLVLKMLHSSSLTSLLKTHRMCKYTQSTALQELLIQQWIQFMMSRRRLLACLCKHKK) is mitochondrial targeting signal. Residues 134-154 (CKHKKVSTNLCTHSFRKKQVR) are nucleolar targeting. The Bipartite nuclear localization signal motif lies at 135 to 153 (KHKKVSTNLCTHSFRKKQV).

Interacts with host RUNX1 isoform b.

It is found in the host nucleus. The protein resides in the host nucleolus. The protein localises to the host mitochondrion. Its function is as follows. Induces host cell G0/G1 arrest and apoptosis. This Homo sapiens (Human) protein is ORF3b protein.